We begin with the raw amino-acid sequence, 615 residues long: uncharacterized protein (615 aa).

The active-site Proton acceptor is aspartate 403. Catalysis depends on glutamate 406, which acts as the Proton donor.

Belongs to the glycosyl hydrolase 15 family.

This is an uncharacterized protein from Methanocaldococcus jannaschii (strain ATCC 43067 / DSM 2661 / JAL-1 / JCM 10045 / NBRC 100440) (Methanococcus jannaschii).